The primary structure comprises 520 residues: Glutamate decarboxylase-like protein FG08083 (520 aa).

Residue 86–88 (KLV) coordinates substrate. Residue Lys300 is modified to N6-(pyridoxal phosphate)lysine. The disordered stretch occupies residues 338-357 (KNGVSSEQSANTNGSEKESW). A compositionally biased stretch (polar residues) spans 340–351 (GVSSEQSANTNG). Arg492 contacts substrate.

The protein belongs to the group II decarboxylase family. It depends on pyridoxal 5'-phosphate as a cofactor.

The protein operates within mycotoxin biosynthesis. Glutamate decarboxylase-like protein; part of the gene cluster that mediates the biosynthesis of butenolide, a mycotoxin that shows antibiotic activity but does not seem to play a major role in the spread of head blight in wheat. Butenolide is derived from glutamic acid via a 4-acetamido-2-butenoic acid intermediate. The predicted function of the NADH:flavin oxidoreductase FG08077, the cytochrome P450 monooxygenase FG08079, the decarboxylase FG08083, and the putative acetyltransferase FG08082 are consistent with this pathway, however, the respective activities of the butelonide biosynthesis cluster enzymes have still to be experimentally determined. This is Glutamate decarboxylase-like protein FG08083 from Gibberella zeae (strain ATCC MYA-4620 / CBS 123657 / FGSC 9075 / NRRL 31084 / PH-1) (Wheat head blight fungus).